Consider the following 79-residue polypeptide: Small ribosomal subunit protein uS17 (79 aa).

The protein belongs to the universal ribosomal protein uS17 family. In terms of assembly, part of the 30S ribosomal subunit.

In terms of biological role, one of the primary rRNA binding proteins, it binds specifically to the 5'-end of 16S ribosomal RNA. In Caulobacter vibrioides (strain NA1000 / CB15N) (Caulobacter crescentus), this protein is Small ribosomal subunit protein uS17.